Consider the following 890-residue polypeptide: DNA mismatch repair protein MutS (890 aa).

ATP is bound at residue Gly645–Ser652.

Belongs to the DNA mismatch repair MutS family.

This protein is involved in the repair of mismatches in DNA. It is possible that it carries out the mismatch recognition step. This protein has a weak ATPase activity. The protein is DNA mismatch repair protein MutS of Rickettsia conorii (strain ATCC VR-613 / Malish 7).